Consider the following 84-residue polypeptide: RNA-binding protein Hfq (84 aa).

Positions 11–71 (DTFLNHVRKN…ISTIMPGHPV (61 aa)) constitute a Sm domain.

It belongs to the Hfq family. As to quaternary structure, homohexamer.

Its function is as follows. RNA chaperone that binds small regulatory RNA (sRNAs) and mRNAs to facilitate mRNA translational regulation in response to envelope stress, environmental stress and changes in metabolite concentrations. Also binds with high specificity to tRNAs. The chain is RNA-binding protein Hfq from Methylorubrum populi (strain ATCC BAA-705 / NCIMB 13946 / BJ001) (Methylobacterium populi).